The chain runs to 29 residues: Cytochrome b6-f complex subunit 8 (29 aa).

A helical membrane pass occupies residues 3-23 (IVSIGWAALMVVFTFSLSLVV).

It belongs to the PetN family. The 4 large subunits of the cytochrome b6-f complex are cytochrome b6, subunit IV (17 kDa polypeptide, PetD), cytochrome f and the Rieske protein, while the 4 small subunits are PetG, PetL, PetM and PetN. The complex functions as a dimer.

The protein localises to the plastid. The protein resides in the chloroplast thylakoid membrane. Component of the cytochrome b6-f complex, which mediates electron transfer between photosystem II (PSII) and photosystem I (PSI), cyclic electron flow around PSI, and state transitions. In Zygnema circumcarinatum (Green alga), this protein is Cytochrome b6-f complex subunit 8.